The following is a 425-amino-acid chain: Sucrose-phosphatase 1 (425 aa).

The protein belongs to the sucrose phosphatase family. Homodimer. Mg(2+) serves as cofactor.

The enzyme catalyses sucrose 6(F)-phosphate + H2O = sucrose + phosphate. The protein operates within glycan biosynthesis; sucrose biosynthesis; sucrose from D-fructose 6-phosphate and UDP-alpha-D-glucose: step 2/2. With respect to regulation, inhibited by EDTA. Catalyzes the final step of sucrose synthesis. The chain is Sucrose-phosphatase 1 (SPP1) from Nicotiana tabacum (Common tobacco).